The primary structure comprises 620 residues: Glutathione-regulated potassium-efflux system protein KefC (620 aa).

Residues 1–3 (MDS) are Periplasmic-facing. Residues 4-24 (HTLIQALIYLGSAALIVPIAV) traverse the membrane as a helical segment. A topological domain (cytoplasmic) is located at residue Arg25. The helical transmembrane segment at 26–46 (LGLGSVLGYLIAGCIIGPWGL) threads the bilayer. At 47 to 53 (RLVTDAE) the chain is on the periplasmic side. Residues 54–74 (SILHFAEIGVVLMLFIIGLEL) traverse the membrane as a helical segment. At 75-89 (DPQRLWKLRAAVFGG) the chain is on the cytoplasmic side. The helical transmembrane segment at 90–110 (GALQMVICGGLLGLFCMLLGL) threads the bilayer. Topologically, residues 111 to 113 (RWQ) are periplasmic. Residues 114-134 (VAELIGMTLALSSTAIAMQAM) traverse the membrane as a helical segment. The Cytoplasmic segment spans residues 135–148 (NERNLMVTQMGRSA). The chain crosses the membrane as a helical span at residues 149-169 (FAVLLFQDIAAIPLVAMIPLL). The Periplasmic portion of the chain corresponds to 170–177 (AASSASTT). The helical transmembrane segment at 178–198 (MGAFVLSALKVAGALALVVLL) threads the bilayer. The Cytoplasmic segment spans residues 199 to 213 (GRYVTRPALRFVARS). The chain crosses the membrane as a helical span at residues 214 to 233 (GLREVFSAVALFLVFGFGLL). Topologically, residues 234-236 (LEE) are periplasmic. A helical transmembrane segment spans residues 237 to 254 (VGLSMAMGAFLAGVLLAS). Topologically, residues 255 to 269 (SEYRHALESDIEPFK) are cytoplasmic. The helical transmembrane segment at 270-290 (GLLLGLFFIGVGMSIDFGTLL) threads the bilayer. Over 291-293 (ENP) the chain is Periplasmic. Residues 294–314 (LRIVILLLGFLIIKIAMLWLI) form a helical membrane-spanning segment. Residues 315-326 (ARPLQVPNKQRR) lie on the Cytoplasmic side of the membrane. Residues 327–347 (WFAVLLGQGSEFAFVVFGAAQ) traverse the membrane as a helical segment. Residues 348–358 (MANVLEPEWAK) lie on the Periplasmic side of the membrane. A helical membrane pass occupies residues 359–379 (SLTLAVALSMAATPILLVILN). The Cytoplasmic segment spans residues 380 to 620 (RLEQSSTEEA…ADEPETKPSS (241 aa)). The 120-residue stretch at 399–518 (QPRVIIAGFG…AGVEKPERET (120 aa)) folds into the RCK N-terminal domain. The interval 597-620 (GWQGTEEGKHTGNMADEPETKPSS) is disordered.

It belongs to the monovalent cation:proton antiporter 2 (CPA2) transporter (TC 2.A.37) family. KefC subfamily. Homodimer. Interacts with the regulatory subunit KefF.

It localises to the cell inner membrane. Pore-forming subunit of a potassium efflux system that confers protection against electrophiles. Catalyzes K(+)/H(+) antiport. The sequence is that of Glutathione-regulated potassium-efflux system protein KefC from Escherichia coli O6:H1 (strain CFT073 / ATCC 700928 / UPEC).